Here is a 205-residue protein sequence, read N- to C-terminus: Small ribosomal subunit protein uS4 (205 aa).

An S4 RNA-binding domain is found at 94 to 157 (SRLDTVVYRM…KQIPLIQESV (64 aa)).

Belongs to the universal ribosomal protein uS4 family. In terms of assembly, part of the 30S ribosomal subunit. Contacts protein S5. The interaction surface between S4 and S5 is involved in control of translational fidelity.

One of the primary rRNA binding proteins, it binds directly to 16S rRNA where it nucleates assembly of the body of the 30S subunit. Functionally, with S5 and S12 plays an important role in translational accuracy. This chain is Small ribosomal subunit protein uS4, found in Rickettsia felis (strain ATCC VR-1525 / URRWXCal2) (Rickettsia azadi).